We begin with the raw amino-acid sequence, 433 residues long: MSSSVDFVTEQGRCGDDGNGAGETVKNGEIDHLLSEPSAPTISLPTESFLRAATLLKNQVVEATWKGGVEALASGSGPVLDPTVYTGLLGTAFTCLKSYEVTRNHQDLLTCAEIIDTCANVARATTRHVTFLCGRGGVCTLGAIVANYRGDQSKRDFFLGLFLELAEERELPAGPEEGGFGMSYDLLYGRAGFLWAALFLNRYLGQGTVPDHLLSPIVAAILAGGRVGAADHEACPLLYRFHGTRFWGAANGLAGILYVLLHFPLSEEDVKDVQGTLRYMMSNRFPNSGNYPCSEGNPRDKLVQWAHGATGMAITLAKASQVFPKERDFREAAIEAGEVVWKSGLVKKVGLADGVAGNAYAFLSLYRLTGDVVYEERAKAFASYLCRDAIELVNMTSQETEHDYSLFRGLAGPVCLWFDLVSPVDSKFPGYEI.

Positions 1-22 (MSSSVDFVTEQGRCGDDGNGAG) are disordered.

It belongs to the LanC-like protein family.

May play a role in signaling. May be not involved in abscisic acid (ABA) signaling. The polypeptide is LanC-like protein GCL1 (GCL1) (Arabidopsis thaliana (Mouse-ear cress)).